A 278-amino-acid chain; its full sequence is MKETFIHPTALVEQGVELGQGVSVGPFCHIQSGAVIGDNSELMSHVVVTGATTLGTGGKVYPHAVLGCDPQNNKHKGGPTKLNIGANCLIREGVTMHKGSDSARGYTSVGDNCSFLAYAHVAHDCDIGDYVTFSNNVMIGGHTTIGHHAILGGGAAIHQFVRVGHHAFVGGMAAVVSDLIPYGMAIGVHAHLGGLNIVGMKRSGMERKEIHNLRHAVRMLFDRTKPIRDRAKDVLTAIPDSPAVIDMIDFINVDTKRAYCTPPLDAVHGGAGHDSGED.

Belongs to the transferase hexapeptide repeat family. LpxA subfamily. As to quaternary structure, homotrimer.

Its subcellular location is the cytoplasm. It carries out the reaction a (3R)-hydroxyacyl-[ACP] + UDP-N-acetyl-alpha-D-glucosamine = a UDP-3-O-[(3R)-3-hydroxyacyl]-N-acetyl-alpha-D-glucosamine + holo-[ACP]. It functions in the pathway glycolipid biosynthesis; lipid IV(A) biosynthesis; lipid IV(A) from (3R)-3-hydroxytetradecanoyl-[acyl-carrier-protein] and UDP-N-acetyl-alpha-D-glucosamine: step 1/6. Functionally, involved in the biosynthesis of lipid A, a phosphorylated glycolipid that anchors the lipopolysaccharide to the outer membrane of the cell. The sequence is that of Acyl-[acyl-carrier-protein]--UDP-N-acetylglucosamine O-acyltransferase from Brucella anthropi (strain ATCC 49188 / DSM 6882 / CCUG 24695 / JCM 21032 / LMG 3331 / NBRC 15819 / NCTC 12168 / Alc 37) (Ochrobactrum anthropi).